We begin with the raw amino-acid sequence, 116 residues long: Ribonuclease P protein component (116 aa).

This sequence belongs to the RnpA family. In terms of assembly, consists of a catalytic RNA component (M1 or rnpB) and a protein subunit.

The enzyme catalyses Endonucleolytic cleavage of RNA, removing 5'-extranucleotides from tRNA precursor.. RNaseP catalyzes the removal of the 5'-leader sequence from pre-tRNA to produce the mature 5'-terminus. It can also cleave other RNA substrates such as 4.5S RNA. The protein component plays an auxiliary but essential role in vivo by binding to the 5'-leader sequence and broadening the substrate specificity of the ribozyme. This chain is Ribonuclease P protein component, found in Geobacter sp. (strain M21).